Consider the following 278-residue polypeptide: Shikimate dehydrogenase (NADP(+)) (278 aa).

Residues 18 to 20 (SKS) and Thr-65 contribute to the shikimate site. Lys-69 serves as the catalytic Proton acceptor. Glu-81 provides a ligand contact to NADP(+). Residues Asn-90 and Asp-106 each contribute to the shikimate site. NADP(+)-binding positions include 130–134 (GAGGA) and 154–159 (NRTFAK). Tyr-223 serves as a coordination point for shikimate. Gly-241 is an NADP(+) binding site.

This sequence belongs to the shikimate dehydrogenase family. In terms of assembly, homodimer.

The catalysed reaction is shikimate + NADP(+) = 3-dehydroshikimate + NADPH + H(+). It participates in metabolic intermediate biosynthesis; chorismate biosynthesis; chorismate from D-erythrose 4-phosphate and phosphoenolpyruvate: step 4/7. Its function is as follows. Involved in the biosynthesis of the chorismate, which leads to the biosynthesis of aromatic amino acids. Catalyzes the reversible NADPH linked reduction of 3-dehydroshikimate (DHSA) to yield shikimate (SA). The protein is Shikimate dehydrogenase (NADP(+)) of Vibrio cholerae serotype O1 (strain ATCC 39541 / Classical Ogawa 395 / O395).